Reading from the N-terminus, the 670-residue chain is FAD-binding monooxygenase ausC (670 aa).

FAD-binding positions include 144-147, 156-157, and Tyr162; these read TWYW and DT. 154 to 156 provides a ligand contact to NADP(+); sequence MCD. NADP(+) contacts are provided by residues 299-305 and 322-323; these read TGASAVQ and RT.

This sequence belongs to the FAD-binding monooxygenase family. Requires FAD as cofactor.

The catalysed reaction is preaustinoid A + AH2 + O2 = preaustinoid A1 + A + H2O. Its pathway is secondary metabolite biosynthesis; terpenoid biosynthesis. In terms of biological role, FAD-binding monooxygenase; part of the gene cluster that mediates the biosynthesis of calidodehydroaustin, a fungal meroterpenoid. The first step of the pathway is the synthesis of 3,5-dimethylorsellinic acid by the polyketide synthase ausA. 3,5-dimethylorsellinic acid is then prenylated by the polyprenyl transferase ausN. Further epoxidation by the FAD-dependent monooxygenase ausM and cyclization by the probable terpene cyclase ausL lead to the formation of protoaustinoid A. Protoaustinoid A is then oxidized to spiro-lactone preaustinoid A3 by the combined action of the FAD-binding monooxygenases ausB and ausC, and the dioxygenase ausE. Acid-catalyzed keto-rearrangement and ring contraction of the tetraketide portion of preaustinoid A3 by ausJ lead to the formation of preaustinoid A4. The aldo-keto reductase ausK, with the help of ausH, is involved in the next step by transforming preaustinoid A4 into isoaustinone which is in turn hydroxylated by the P450 monooxygenase ausI to form austinolide. The cytochrome P450 monooxygenase ausG modifies austinolide to austinol. Austinol is further acetylated to austin by the O-acetyltransferase ausP, which spontaneously changes to dehydroaustin. The cytochrome P450 monooxygenase ausR then converts dehydroaustin is into 7-dehydrodehydroaustin. The hydroxylation catalyzed by ausR permits the O-acetyltransferase ausQ to add an additional acetyl group to the molecule, leading to the formation of acetoxydehydroaustin. The short chain dehydrogenase ausT catalyzes the reduction of the double bond present between carbon atoms 1 and 2 to convert 7-dehydrodehydroaustin into 1,2-dihydro-7-hydroxydehydroaustin. AusQ catalyzes not only an acetylation reaction but also the addition of the PKS ausV diketide product to 1,2-dihydro-7-hydroxydehydroaustin, forming precalidodehydroaustin. Finally, the iron/alpha-ketoglutarate-dependent dioxygenase converts precalidodehydroaustin into calidodehydroaustin. This Aspergillus calidoustus protein is FAD-binding monooxygenase ausC.